Reading from the N-terminus, the 136-residue chain is Large ribosomal subunit protein bL21 (136 aa).

Over residues 1 to 21 (MSETPSKAKASKPAESKAQAS) the composition is skewed to low complexity. Residues 1-25 (MSETPSKAKASKPAESKAQASDSSG) form a disordered region.

The protein belongs to the bacterial ribosomal protein bL21 family. In terms of assembly, part of the 50S ribosomal subunit. Contacts protein L20.

Functionally, this protein binds to 23S rRNA in the presence of protein L20. This chain is Large ribosomal subunit protein bL21, found in Synechococcus sp. (strain RCC307).